The following is a 366-amino-acid chain: Probable cyclin-dependent kinase 10 (366 aa).

In terms of domain architecture, Protein kinase spans 7-293 (FEKLDSIGEG…ASDAIKHPFF (287 aa)). ATP is bound by residues 13-21 (IGEGTYGIV) and Lys36. Asp132 functions as the Proton acceptor in the catalytic mechanism. The span at 315-358 (FKNQNKKQNNNFNNFVQNNQTNQNNQTNQNNQTNQNNKTSQNNN) shows a compositional bias: low complexity. The interval 315–366 (FKNQNKKQNNNFNNFVQNNQTNQNNQTNQNNQTNQNNKTSQNNNMDSYKYSK) is disordered.

Belongs to the protein kinase superfamily. CMGC Ser/Thr protein kinase family. CDC2/CDKX subfamily.

The catalysed reaction is L-seryl-[protein] + ATP = O-phospho-L-seryl-[protein] + ADP + H(+). It carries out the reaction L-threonyl-[protein] + ATP = O-phospho-L-threonyl-[protein] + ADP + H(+). This Dictyostelium discoideum (Social amoeba) protein is Probable cyclin-dependent kinase 10 (cdk10).